A 198-amino-acid polypeptide reads, in one-letter code: Zinc finger protein 41 homolog (198 aa).

Positions 1 to 12 are enriched in basic residues; sequence MEKPAGRKKKTP. Residues 1–55 are disordered; it reads MEKPAGRKKKTPTPREEADVQKSALREEKVSGDRKPPERPTVPRKPRTEPCLSPE. Over residues 13–38 the composition is skewed to basic and acidic residues; sequence TPREEADVQKSALREEKVSGDRKPPE. C2H2-type zinc fingers lie at residues 87–109, 115–137, 143–165, and 171–193; these read YECSECGRIFKHKTDHIRHQRVH, FKCAQCGKAFRHSSDVTKHQRTH, FKCGECGKAFNCGSNLLKHQKTH, and YECTHCGKAFAYSSCLIRHQKRH.

This sequence belongs to the krueppel C2H2-type zinc-finger protein family.

The protein localises to the nucleus. In terms of biological role, a putative DNA-binding regulatory protein associated with meiosis in spermatogenesis. This Homo sapiens (Human) protein is Zinc finger protein 41 homolog (ZFP41).